We begin with the raw amino-acid sequence, 859 residues long: Valine--tRNA ligase (859 aa).

The short motif at 46-56 (PTVSGQLHIGH) is the 'HIGH' region element. The short motif at 583-587 (KMSKS) is the 'KMSKS' region element. ATP is bound at residue lysine 586.

The protein belongs to the class-I aminoacyl-tRNA synthetase family. ValS type 2 subfamily. In terms of assembly, monomer.

It is found in the cytoplasm. The enzyme catalyses tRNA(Val) + L-valine + ATP = L-valyl-tRNA(Val) + AMP + diphosphate. Its function is as follows. Catalyzes the attachment of valine to tRNA(Val). As ValRS can inadvertently accommodate and process structurally similar amino acids such as threonine, to avoid such errors, it has a 'posttransfer' editing activity that hydrolyzes mischarged Thr-tRNA(Val) in a tRNA-dependent manner. This Rickettsia felis (strain ATCC VR-1525 / URRWXCal2) (Rickettsia azadi) protein is Valine--tRNA ligase.